We begin with the raw amino-acid sequence, 330 residues long: Glucokinase (330 aa).

Residue 14–19 (ADIGGT) coordinates ATP.

Belongs to the bacterial glucokinase family.

It localises to the cytoplasm. It carries out the reaction D-glucose + ATP = D-glucose 6-phosphate + ADP + H(+). In Colwellia psychrerythraea (strain 34H / ATCC BAA-681) (Vibrio psychroerythus), this protein is Glucokinase.